A 493-amino-acid chain; its full sequence is Glutamate--tRNA ligase (493 aa).

A 'HIGH' region motif is present at residues 10–20; it reads PSPTGDPHVGT. Positions 251-255 match the 'KMSKS' region motif; it reads KLSKR. Residue Lys-254 coordinates ATP.

It belongs to the class-I aminoacyl-tRNA synthetase family. Glutamate--tRNA ligase type 1 subfamily. In terms of assembly, monomer.

It is found in the cytoplasm. It carries out the reaction tRNA(Glu) + L-glutamate + ATP = L-glutamyl-tRNA(Glu) + AMP + diphosphate. Its function is as follows. Catalyzes the attachment of glutamate to tRNA(Glu) in a two-step reaction: glutamate is first activated by ATP to form Glu-AMP and then transferred to the acceptor end of tRNA(Glu). In Pseudomonas putida (strain GB-1), this protein is Glutamate--tRNA ligase.